A 632-amino-acid polypeptide reads, in one-letter code: tRNA uridine 5-carboxymethylaminomethyl modification enzyme MnmG (632 aa).

FAD-binding positions include 16-21, Val-128, and Ser-183; that span reads GAGHAG. The interval 206 to 225 is disordered; it reads PRVNGNTIDYSKTEEEPGDK. The span at 216-225 shows a compositional bias: basic and acidic residues; it reads SKTEEEPGDK. NAD(+) is bound at residue 277 to 291; that stretch reads GPRYCPSIEDKVVRF. Gln-374 contributes to the FAD binding site.

This sequence belongs to the MnmG family. In terms of assembly, homodimer. Heterotetramer of two MnmE and two MnmG subunits. The cofactor is FAD.

It localises to the cytoplasm. Its function is as follows. NAD-binding protein involved in the addition of a carboxymethylaminomethyl (cmnm) group at the wobble position (U34) of certain tRNAs, forming tRNA-cmnm(5)s(2)U34. The chain is tRNA uridine 5-carboxymethylaminomethyl modification enzyme MnmG from Lactobacillus acidophilus (strain ATCC 700396 / NCK56 / N2 / NCFM).